Here is a 170-residue protein sequence, read N- to C-terminus: Peptide deformylase (170 aa).

Residues Cys94 and His136 each coordinate Fe cation. Residue Glu137 is part of the active site. A Fe cation-binding site is contributed by His140.

Belongs to the polypeptide deformylase family. Fe(2+) serves as cofactor.

The catalysed reaction is N-terminal N-formyl-L-methionyl-[peptide] + H2O = N-terminal L-methionyl-[peptide] + formate. Its function is as follows. Removes the formyl group from the N-terminal Met of newly synthesized proteins. Requires at least a dipeptide for an efficient rate of reaction. N-terminal L-methionine is a prerequisite for activity but the enzyme has broad specificity at other positions. This chain is Peptide deformylase, found in Stenotrophomonas maltophilia (strain R551-3).